Consider the following 401-residue polypeptide: Enoyl-[acyl-carrier-protein] reductase [NADH] (401 aa).

NAD(+) contacts are provided by residues 48–53 (GSSSGY), 74–75 (FE), 111–112 (DA), and 139–140 (LA). Y225 serves as a coordination point for substrate. Y235 serves as the catalytic Proton donor. Residues K244 and 273 to 275 (VVT) each bind NAD(+).

Belongs to the TER reductase family. In terms of assembly, monomer.

The catalysed reaction is a 2,3-saturated acyl-[ACP] + NAD(+) = a (2E)-enoyl-[ACP] + NADH + H(+). It functions in the pathway lipid metabolism; fatty acid biosynthesis. Its function is as follows. Involved in the final reduction of the elongation cycle of fatty acid synthesis (FAS II). Catalyzes the reduction of a carbon-carbon double bond in an enoyl moiety that is covalently linked to an acyl carrier protein (ACP). This chain is Enoyl-[acyl-carrier-protein] reductase [NADH], found in Shewanella putrefaciens (strain CN-32 / ATCC BAA-453).